We begin with the raw amino-acid sequence, 362 residues long: Peptide chain release factor 1 (362 aa).

The residue at position 237 (Gln237) is an N5-methylglutamine.

It belongs to the prokaryotic/mitochondrial release factor family. Post-translationally, methylated by PrmC. Methylation increases the termination efficiency of RF1.

It localises to the cytoplasm. Functionally, peptide chain release factor 1 directs the termination of translation in response to the peptide chain termination codons UAG and UAA. This chain is Peptide chain release factor 1, found in Marinomonas sp. (strain MWYL1).